Here is a 234-residue protein sequence, read N- to C-terminus: N-acetyl-alpha-D-glucosaminyl L-malate deacetylase 1 (234 aa).

His12, Asp15, and His113 together coordinate Zn(2+).

This sequence belongs to the PIGL family. In terms of assembly, homohexamer. Trimer of dimers. It depends on Zn(2+) as a cofactor.

The enzyme catalyses (S)-malyl N-acetyl-alpha-D-glucosaminide + H2O = (S)-malyl alpha-D-glucosaminide + acetate. Its function is as follows. Involved in bacillithiol (BSH) biosynthesis. Catalyzes the second step of the pathway, the deacetylation of N-acetylglucosaminylmalate (GlcNAc-Mal) to glucosamine malate (GlcN-Mal). The chain is N-acetyl-alpha-D-glucosaminyl L-malate deacetylase 1 from Bacillus cereus (strain ATCC 14579 / DSM 31 / CCUG 7414 / JCM 2152 / NBRC 15305 / NCIMB 9373 / NCTC 2599 / NRRL B-3711).